We begin with the raw amino-acid sequence, 311 residues long: Aspartate carbamoyltransferase catalytic subunit (311 aa).

Residues R58 and T59 each contribute to the carbamoyl phosphate site. Residue K86 coordinates L-aspartate. Carbamoyl phosphate is bound by residues R108, H136, and Q139. The L-aspartate site is built by R169 and R223. The carbamoyl phosphate site is built by G264 and P265.

The protein belongs to the aspartate/ornithine carbamoyltransferase superfamily. ATCase family. As to quaternary structure, heterododecamer (2C3:3R2) of six catalytic PyrB chains organized as two trimers (C3), and six regulatory PyrI chains organized as three dimers (R2).

It catalyses the reaction carbamoyl phosphate + L-aspartate = N-carbamoyl-L-aspartate + phosphate + H(+). It participates in pyrimidine metabolism; UMP biosynthesis via de novo pathway; (S)-dihydroorotate from bicarbonate: step 2/3. In terms of biological role, catalyzes the condensation of carbamoyl phosphate and aspartate to form carbamoyl aspartate and inorganic phosphate, the committed step in the de novo pyrimidine nucleotide biosynthesis pathway. The sequence is that of Aspartate carbamoyltransferase catalytic subunit from Desulfosudis oleivorans (strain DSM 6200 / JCM 39069 / Hxd3) (Desulfococcus oleovorans).